The primary structure comprises 341 residues: Phenylalanine--tRNA ligase alpha subunit (341 aa).

A Mg(2+)-binding site is contributed by Glu254.

Belongs to the class-II aminoacyl-tRNA synthetase family. Phe-tRNA synthetase alpha subunit type 1 subfamily. As to quaternary structure, tetramer of two alpha and two beta subunits. Mg(2+) serves as cofactor.

Its subcellular location is the cytoplasm. It carries out the reaction tRNA(Phe) + L-phenylalanine + ATP = L-phenylalanyl-tRNA(Phe) + AMP + diphosphate + H(+). This chain is Phenylalanine--tRNA ligase alpha subunit (pheS), found in Mycoplasma genitalium (strain ATCC 33530 / DSM 19775 / NCTC 10195 / G37) (Mycoplasmoides genitalium).